Consider the following 372-residue polypeptide: tRNA-specific 2-thiouridylase MnmA (372 aa).

ATP contacts are provided by residues 7–14 (GLSGGVDS) and M33. The segment at 104-106 (NPD) is interaction with target base in tRNA. C109 functions as the Nucleophile in the catalytic mechanism. A disulfide bridge connects residues C109 and C202. G134 is a binding site for ATP. The interaction with tRNA stretch occupies residues 152-154 (KDQ). C202 acts as the Cysteine persulfide intermediate in catalysis. Positions 310 to 311 (RY) are interaction with tRNA.

Belongs to the MnmA/TRMU family.

The protein localises to the cytoplasm. It catalyses the reaction S-sulfanyl-L-cysteinyl-[protein] + uridine(34) in tRNA + AH2 + ATP = 2-thiouridine(34) in tRNA + L-cysteinyl-[protein] + A + AMP + diphosphate + H(+). Functionally, catalyzes the 2-thiolation of uridine at the wobble position (U34) of tRNA, leading to the formation of s(2)U34. The sequence is that of tRNA-specific 2-thiouridylase MnmA from Mesomycoplasma hyopneumoniae (strain 232) (Mycoplasma hyopneumoniae).